Reading from the N-terminus, the 206-residue chain is Transmembrane emp24 domain-containing protein bai (206 aa).

Residues 1-17 (MAKATFFYFLFIGYVWP) form the signal peptide. Residues 18–172 (IDSVMFNLAP…RDTNEKTNSR (155 aa)) are Lumenal-facing. The 111-residue stretch at 30–140 (QKCLKEDIQA…LKPLEVDLKR (111 aa)) folds into the GOLD domain. Residues 173-193 (VLFFSIFSMCCLLGLATWQVL) form a helical membrane-spanning segment. Residues 194–206 (YLRRYFKAKKLIE) are Cytoplasmic-facing.

This sequence belongs to the EMP24/GP25L family.

The protein localises to the membrane. Its function is as follows. Eca and bai are essential, though not redundant, for dorsoventral patterning of the embryo. Specifically required during early embryogenesis for the activity of maternal tkv, while the zygotic tkv is not affected. The polypeptide is Transmembrane emp24 domain-containing protein bai (Drosophila persimilis (Fruit fly)).